We begin with the raw amino-acid sequence, 348 residues long: Sex-lethal homolog (348 aa).

RRM domains lie at 110 to 188 (TNLI…YARP) and 196 to 276 (TNLY…LAEE). Over residues 296–310 (GGGGGGGGGGGGGMG) the composition is skewed to gly residues. The interval 296–317 (GGGGGGGGGGGGGMGGPPPPPM) is disordered.

The protein localises to the nucleus. Functionally, unknown; apparently not involved in somatic sex determination. This Ceratitis capitata (Mediterranean fruit fly) protein is Sex-lethal homolog (SXL).